We begin with the raw amino-acid sequence, 341 residues long: HTH-type transcriptional repressor PurR (341 aa).

The region spanning 2–56 is the HTH lacI-type domain; it reads ATIKDVAKRAGVSTTTVSHVINKTRFVADETREAVWVAIKELHYSPSAVARSLKV. Positions 4–23 form a DNA-binding region, H-T-H motif; it reads IKDVAKRAGVSTTTVSHVIN. A DNA-binding region spans residues 48-56; it reads SAVARSLKV. Residues Tyr73, Arg190, Thr192, Phe221, and Asp275 each contribute to the hypoxanthine site.

As to quaternary structure, homodimer.

It participates in purine metabolism; purine nucleotide biosynthesis [regulation]. Its function is as follows. Is the main repressor of the genes involved in the de novo synthesis of purine nucleotides, regulating purB, purC, purEK, purF, purHD, purL, purMN and guaBA expression. PurR is allosterically activated to bind its cognate DNA by binding the purine corepressors, hypoxanthine or guanine, thereby effecting transcription repression. The polypeptide is HTH-type transcriptional repressor PurR (Erwinia tasmaniensis (strain DSM 17950 / CFBP 7177 / CIP 109463 / NCPPB 4357 / Et1/99)).